The sequence spans 400 residues: Probable tRNA pseudouridine synthase D (400 aa).

The active-site Nucleophile is the aspartate 89. The TRUD domain occupies 162-357; that stretch reads GVPNYYGLQR…AGGDRKPALL (196 aa).

This sequence belongs to the pseudouridine synthase TruD family.

It catalyses the reaction uridine(13) in tRNA = pseudouridine(13) in tRNA. Functionally, could be responsible for synthesis of pseudouridine from uracil-13 in transfer RNAs. The sequence is that of Probable tRNA pseudouridine synthase D from Methanopyrus kandleri (strain AV19 / DSM 6324 / JCM 9639 / NBRC 100938).